Here is a 66-residue protein sequence, read N- to C-terminus: Conotoxin Cl14.1a (66 aa).

Positions 1-19 are cleaved as a signal peptide; sequence MNVTAMFIVLLLTMPLTDG. Positions 20–49 are excised as a propeptide; it reads FNIRAINGGELFGLVQRDAGNALDHGFYRR.

The protein belongs to the conotoxin L superfamily. In terms of processing, contains 2 disulfide bonds. In terms of tissue distribution, expressed by the venom duct.

It localises to the secreted. Functionally, probable neurotoxin with unknown target. Possibly targets ion channels. This peptide could be considered as an apoptosis activator in some cancers (tested on lung and breast cancer cell lines). Provokes the decrease of H1299 lung cancer cells viability after 24 hours treatment, and induces a high Bax/Bcl-2 ratio, which suggests that this peptide can activate apoptosis in H1299 cells. In addition, H1299 and H1437 lung cancer cell lines treated with this peptide have decreased cell viability, activated caspases, and reduced expression of the pro-survival protein NF-kappa-B (NFKB1), indicating activation of apoptosis. In synergy with MicroRNA-101-3p, this synthetic peptide inhibits breast cancer cells (SK-BR-3 and MCF-7) migration, invasion, and proliferation through suppressing the expression of the methyltransferase EZH2. In parallel, this synergy treatment is able to promote the apoptosis of breast cancer cells. Against microbes, this synthetic toxin (at micromolar concentrations) lowers viability and inhibits host cell invasion by the opportunistic parasite Toxoplasma gondii (tachyzoite form). In addition, it permits T.gondii intracellular replication to decrease while viability of the host cell is unaffected. This Californiconus californicus (California cone) protein is Conotoxin Cl14.1a.